Consider the following 776-residue polypeptide: Protein translocase subunit SecA 2 (776 aa).

Residues Gln-80, Gly-98 to Thr-102, and Asp-486 contribute to the ATP site.

Belongs to the SecA family. In terms of assembly, monomer and homodimer. Part of the essential Sec protein translocation apparatus which comprises SecA, SecYEG and auxiliary proteins SecDF. Other proteins may also be involved.

It localises to the cell membrane. Its subcellular location is the cytoplasm. The enzyme catalyses ATP + H2O + cellular proteinSide 1 = ADP + phosphate + cellular proteinSide 2.. Part of the Sec protein translocase complex. Interacts with the SecYEG preprotein conducting channel. Has a central role in coupling the hydrolysis of ATP to the transfer of proteins into and across the cell membrane, serving as an ATP-driven molecular motor driving the stepwise translocation of polypeptide chains across the membrane. The polypeptide is Protein translocase subunit SecA 2 (Listeria innocua serovar 6a (strain ATCC BAA-680 / CLIP 11262)).